Consider the following 389-residue polypeptide: S-adenosylmethionine synthase (389 aa).

H15 lines the ATP pocket. D17 is a Mg(2+) binding site. E43 provides a ligand contact to K(+). Positions 56 and 99 each coordinate L-methionine. A flexible loop region spans residues 99–109; that stretch reads QSPDIAQGVNE. ATP-binding positions include 166–168, 234–235, D243, 249–250, A266, and K270; these read DAK, RF, and RK. Position 243 (D243) interacts with L-methionine. Position 274 (K274) interacts with L-methionine.

It belongs to the AdoMet synthase family. As to quaternary structure, homotetramer; dimer of dimers. Requires Mg(2+) as cofactor. The cofactor is K(+).

It localises to the cytoplasm. The catalysed reaction is L-methionine + ATP + H2O = S-adenosyl-L-methionine + phosphate + diphosphate. It participates in amino-acid biosynthesis; S-adenosyl-L-methionine biosynthesis; S-adenosyl-L-methionine from L-methionine: step 1/1. Catalyzes the formation of S-adenosylmethionine (AdoMet) from methionine and ATP. The overall synthetic reaction is composed of two sequential steps, AdoMet formation and the subsequent tripolyphosphate hydrolysis which occurs prior to release of AdoMet from the enzyme. This is S-adenosylmethionine synthase from Neisseria meningitidis serogroup C (strain 053442).